The primary structure comprises 152 residues: SsrA-binding protein (152 aa).

It belongs to the SmpB family.

It is found in the cytoplasm. In terms of biological role, required for rescue of stalled ribosomes mediated by trans-translation. Binds to transfer-messenger RNA (tmRNA), required for stable association of tmRNA with ribosomes. tmRNA and SmpB together mimic tRNA shape, replacing the anticodon stem-loop with SmpB. tmRNA is encoded by the ssrA gene; the 2 termini fold to resemble tRNA(Ala) and it encodes a 'tag peptide', a short internal open reading frame. During trans-translation Ala-aminoacylated tmRNA acts like a tRNA, entering the A-site of stalled ribosomes, displacing the stalled mRNA. The ribosome then switches to translate the ORF on the tmRNA; the nascent peptide is terminated with the 'tag peptide' encoded by the tmRNA and targeted for degradation. The ribosome is freed to recommence translation, which seems to be the essential function of trans-translation. This is SsrA-binding protein from Helicobacter acinonychis (strain Sheeba).